The sequence spans 158 residues: Small ribosomal subunit protein uS9 (158 aa).

Residues 1-20 are compositionally biased toward polar residues; sequence MSETMQSLDQLSALKTTQPD. Positions 1-29 are disordered; that stretch reads MSETMQSLDQLSALKTTQPDAPTYTKKVD.

It belongs to the universal ribosomal protein uS9 family.

In Rhodopseudomonas palustris (strain BisB5), this protein is Small ribosomal subunit protein uS9.